A 465-amino-acid chain; its full sequence is Ribulose bisphosphate carboxylase large chain (465 aa).

Residue Lys-4 is modified to N6,N6,N6-trimethyllysine. The substrate site is built by Asn-113 and Thr-163. Lys-165 acts as the Proton acceptor in catalysis. Lys-167 contacts substrate. 3 residues coordinate Mg(2+): Lys-191, Asp-193, and Glu-194. Lys-191 carries the post-translational modification N6-carboxylysine. The active-site Proton acceptor is the His-284. Positions 285, 317, and 369 each coordinate substrate.

Belongs to the RuBisCO large chain family. Type I subfamily. As to quaternary structure, heterohexadecamer of 8 large chains and 8 small chains; disulfide-linked. The disulfide link is formed within the large subunit homodimers. Mg(2+) is required as a cofactor. In terms of processing, the disulfide bond which can form in the large chain dimeric partners within the hexadecamer appears to be associated with oxidative stress and protein turnover.

The protein resides in the plastid. It is found in the chloroplast. It catalyses the reaction 2 (2R)-3-phosphoglycerate + 2 H(+) = D-ribulose 1,5-bisphosphate + CO2 + H2O. It carries out the reaction D-ribulose 1,5-bisphosphate + O2 = 2-phosphoglycolate + (2R)-3-phosphoglycerate + 2 H(+). Its function is as follows. RuBisCO catalyzes two reactions: the carboxylation of D-ribulose 1,5-bisphosphate, the primary event in carbon dioxide fixation, as well as the oxidative fragmentation of the pentose substrate in the photorespiration process. Both reactions occur simultaneously and in competition at the same active site. This is Ribulose bisphosphate carboxylase large chain from Bauera rubioides (Dog rose).